Reading from the N-terminus, the 1065-residue chain is Presequence protease, mitochondrial (1065 aa).

A mitochondrion-targeting transit peptide spans 1–42 (MLRSFSGAGKCKCRIPVSRQPVCGRSLRISSTLTPWNQSRRA). His-117 provides a ligand contact to Zn(2+). Catalysis depends on Glu-120, which acts as the Proton acceptor. Position 121 (His-121) interacts with Zn(2+). Glu-193 is a catalytic residue. Residue Glu-230 participates in Zn(2+) binding.

It belongs to the peptidase M16 family. PreP subfamily. Monomer and homodimer; homodimerization is induced by binding of the substrate. The cofactor is Zn(2+).

It is found in the mitochondrion intermembrane space. It localises to the mitochondrion matrix. In terms of biological role, degrades mitochondrial transit peptides after their cleavage in the intermembrane space or in the matrix, and presequence peptides; clearance of these peptides is required to keep the presequence processing machinery running. Preferentially cleaves the N-terminal side of paired basic amino acid residues. Also degrades other unstructured peptides. May function as an ATP-dependent peptidase as opposed to a metalloendopeptidase. This is Presequence protease, mitochondrial (cym1) from Aspergillus fumigatus (strain ATCC MYA-4609 / CBS 101355 / FGSC A1100 / Af293) (Neosartorya fumigata).